We begin with the raw amino-acid sequence, 124 residues long: Transcription initiation factor TFIID subunit 13 (124 aa).

Residues 1-16 (MADEEEDPTFEEENEE) show a composition bias toward acidic residues. Positions 1–28 (MADEEEDPTFEEENEEIGGGAEGGQGKR) are disordered. Positions 32 to 74 (FSKELRCMMYGFGDDQNPYTESVDILEDLVIEFITEMTHKAMS) constitute a Histone-fold domain.

It belongs to the TAF13 family. As to quaternary structure, component of the TFIID basal transcription factor complex, composed of TATA-box-binding protein TBP, and a number of TBP-associated factors (TAFs), including TAF1, TAF2, TAF3, TAF4, TAF5, TAF6, TAF7, TAF8, TAF9, TAF10, TAF11, TAF12 and TAF13. Interacts with TBP, and more strongly with TAF10 and TAF11.

The protein resides in the nucleus. In terms of biological role, the TFIID basal transcription factor complex plays a major role in the initiation of RNA polymerase II (Pol II)-dependent transcription. TFIID recognizes and binds promoters via its subunit TBP, a TATA-box-binding protein, and promotes assembly of the pre-initiation complex (PIC). The TFIID complex consists of TBP and TBP-associated factors (TAFs), including TAF1, TAF2, TAF3, TAF4, TAF5, TAF6, TAF7, TAF8, TAF9, TAF10, TAF11, TAF12 and TAF13. TAF13, together with TAF11 and TBP, play key roles during promoter binding by the TFIID and TFIIA transcription factor complexes. The chain is Transcription initiation factor TFIID subunit 13 from Bos taurus (Bovine).